Consider the following 76-residue polypeptide: Sec-independent protein translocase protein TatA (76 aa).

Residues 1–21 (MGSFSIWHWLIVLAVVLLLFG) traverse the membrane as a helical segment. The disordered stretch occupies residues 43–76 (MSDEDAKDDARDSGRTIDAKADETVNDVKKTTKS). A compositionally biased stretch (basic and acidic residues) spans 50–76 (DDARDSGRTIDAKADETVNDVKKTTKS).

It belongs to the TatA/E family. As to quaternary structure, the Tat system comprises two distinct complexes: a TatABC complex, containing multiple copies of TatA, TatB and TatC subunits, and a separate TatA complex, containing only TatA subunits. Substrates initially bind to the TatABC complex, which probably triggers association of the separate TatA complex to form the active translocon.

It localises to the cell inner membrane. Functionally, part of the twin-arginine translocation (Tat) system that transports large folded proteins containing a characteristic twin-arginine motif in their signal peptide across membranes. TatA could form the protein-conducting channel of the Tat system. This is Sec-independent protein translocase protein TatA from Brucella anthropi (strain ATCC 49188 / DSM 6882 / CCUG 24695 / JCM 21032 / LMG 3331 / NBRC 15819 / NCTC 12168 / Alc 37) (Ochrobactrum anthropi).